The primary structure comprises 338 residues: tRNA N6-adenosine threonylcarbamoyltransferase (338 aa).

2 residues coordinate Fe cation: histidine 111 and histidine 115. Residues 134 to 138 (LVSGG), aspartate 167, glycine 180, and asparagine 272 contribute to the substrate site. Aspartate 300 lines the Fe cation pocket.

Belongs to the KAE1 / TsaD family. The cofactor is Fe(2+).

The protein resides in the cytoplasm. The catalysed reaction is L-threonylcarbamoyladenylate + adenosine(37) in tRNA = N(6)-L-threonylcarbamoyladenosine(37) in tRNA + AMP + H(+). Required for the formation of a threonylcarbamoyl group on adenosine at position 37 (t(6)A37) in tRNAs that read codons beginning with adenine. Is involved in the transfer of the threonylcarbamoyl moiety of threonylcarbamoyl-AMP (TC-AMP) to the N6 group of A37, together with TsaE and TsaB. TsaD likely plays a direct catalytic role in this reaction. This chain is tRNA N6-adenosine threonylcarbamoyltransferase, found in Shewanella putrefaciens (strain CN-32 / ATCC BAA-453).